The following is a 174-amino-acid chain: Co-chaperone protein HscB homolog (174 aa).

Residues 2-74 (NYFELFSFTP…ILRAEHMLSL (73 aa)) form the J domain.

This sequence belongs to the HscB family. As to quaternary structure, interacts with HscA and stimulates its ATPase activity.

Its function is as follows. Co-chaperone involved in the maturation of iron-sulfur cluster-containing proteins. Seems to help targeting proteins to be folded toward HscA. This is Co-chaperone protein HscB homolog from Shewanella woodyi (strain ATCC 51908 / MS32).